Here is a 224-residue protein sequence, read N- to C-terminus: Urease accessory protein UreF (224 aa).

The protein belongs to the UreF family. UreD, UreF and UreG form a complex that acts as a GTP-hydrolysis-dependent molecular chaperone, activating the urease apoprotein by helping to assemble the nickel containing metallocenter of UreC. The UreE protein probably delivers the nickel.

It localises to the cytoplasm. Required for maturation of urease via the functional incorporation of the urease nickel metallocenter. In Pseudomonas putida (strain ATCC 700007 / DSM 6899 / JCM 31910 / BCRC 17059 / LMG 24140 / F1), this protein is Urease accessory protein UreF.